A 563-amino-acid chain; its full sequence is Coiled-coil domain-containing protein 38 (563 aa).

Residues 1-11 are compositionally biased toward polar residues; sequence MSSNLLPTLNS. The interval 1-21 is disordered; it reads MSSNLLPTLNSGGKVKDGSTK. The stretch at 129–212 forms a coiled coil; that stretch reads KRNTIKKFEK…VKSEIAKTEF (84 aa). Residues 272–311 are disordered; that stretch reads ESGRTAVLSEDASQGRDSQGKPSRSLTRTPEKKKSNLAES. Residues 282–299 show a composition bias toward polar residues; sequence DASQGRDSQGKPSRSLTR. 2 coiled-coil regions span residues 384–415 and 497–522; these read NIEF…KSKL and RDEK…AVAQ. Residues 522-563 are disordered; the sequence is QPKKKLGRRLVFHSKPPSGNKQQLPLVNETKTKSQEEEYFFT. Positions 523-533 are enriched in basic residues; it reads PKKKLGRRLVF.

As to quaternary structure, interacts with CCDC42, CFAP53, IFT88 and ODF2. Interacts with CCDC146. Interacts with TEKT3. Interacts with ubiquitinated histone H2A.

It localises to the cytoplasm. The protein localises to the cytoskeleton. Its subcellular location is the microtubule organizing center. The protein resides in the centrosome. It is found in the perinuclear region. It localises to the cell projection. The protein localises to the cilium. Its subcellular location is the flagellum. Functionally, essential for male fertility. Required for sperm flagellum biogenesis. Also required for acrosome biogenesis. Required for the attachment of developing acrosomes to the nucleus during spermiogenesis and may be involved in the transport of fibrous sheath components. This chain is Coiled-coil domain-containing protein 38 (CCDC38), found in Homo sapiens (Human).